Reading from the N-terminus, the 78-residue chain is MSEQLKIKAMRAAGVGCVLMLMIIALVVFMLPTGILIDYLTLAGSWVGGGTTFGILMLAALPPLTGAIFYYFWKWVLK.

Transmembrane regions (helical) follow at residues 13–35 (AGVG…PTGI) and 50–72 (GTTF…FYYF).

Its subcellular location is the cell membrane. This is an uncharacterized protein from Pasteurella multocida (strain Pm70).